Reading from the N-terminus, the 392-residue chain is Probable tRNA sulfurtransferase (392 aa).

Positions 59 to 166 (DEIIERVKKV…ECSFVFTKKV (108 aa)) constitute a THUMP domain. Residues 183 to 184 (LL), 208 to 209 (HF), Arg265, Gly287, and Gln296 each bind ATP.

Belongs to the ThiI family.

Its subcellular location is the cytoplasm. The enzyme catalyses [ThiI sulfur-carrier protein]-S-sulfanyl-L-cysteine + a uridine in tRNA + 2 reduced [2Fe-2S]-[ferredoxin] + ATP + H(+) = [ThiI sulfur-carrier protein]-L-cysteine + a 4-thiouridine in tRNA + 2 oxidized [2Fe-2S]-[ferredoxin] + AMP + diphosphate. It catalyses the reaction [ThiS sulfur-carrier protein]-C-terminal Gly-Gly-AMP + S-sulfanyl-L-cysteinyl-[cysteine desulfurase] + AH2 = [ThiS sulfur-carrier protein]-C-terminal-Gly-aminoethanethioate + L-cysteinyl-[cysteine desulfurase] + A + AMP + 2 H(+). Its pathway is cofactor biosynthesis; thiamine diphosphate biosynthesis. Its function is as follows. Catalyzes the ATP-dependent transfer of a sulfur to tRNA to produce 4-thiouridine in position 8 of tRNAs, which functions as a near-UV photosensor. Also catalyzes the transfer of sulfur to the sulfur carrier protein ThiS, forming ThiS-thiocarboxylate. This is a step in the synthesis of thiazole, in the thiamine biosynthesis pathway. The sulfur is donated as persulfide by IscS. This is Probable tRNA sulfurtransferase from Alkaliphilus metalliredigens (strain QYMF).